A 398-amino-acid chain; its full sequence is Tyrosine--tRNA ligase (398 aa).

The short motif at 48–57 (PTGADIHLGH) is the 'HIGH' region element. A 'KMSKS' region motif is present at residues 235–239 (KMSKS). Lys238 contacts ATP. The S4 RNA-binding domain maps to 334-398 (VKLAYLLGAT…GKNKFMRLVP (65 aa)).

Belongs to the class-I aminoacyl-tRNA synthetase family. TyrS type 2 subfamily. In terms of assembly, homodimer.

The protein resides in the cytoplasm. The enzyme catalyses tRNA(Tyr) + L-tyrosine + ATP = L-tyrosyl-tRNA(Tyr) + AMP + diphosphate + H(+). In terms of biological role, catalyzes the attachment of tyrosine to tRNA(Tyr) in a two-step reaction: tyrosine is first activated by ATP to form Tyr-AMP and then transferred to the acceptor end of tRNA(Tyr). This chain is Tyrosine--tRNA ligase, found in Nostoc sp. (strain PCC 7120 / SAG 25.82 / UTEX 2576).